The chain runs to 165 residues: Protein phosphatase 1 regulatory subunit 14C (165 aa).

Low complexity predominate over residues Met1–Gly12. Residues Met1–Thr73 are disordered. Ser2 is modified (N-acetylserine). Position 25 is a phosphoserine (Ser25). Arg27 is subject to Omega-N-methylarginine. Ser33 bears the Phosphoserine mark. The segment covering Gly35 to Gln63 has biased composition (low complexity). Thr73 is subject to Phosphothreonine; by ILK1.

Belongs to the PP1 inhibitor family. In terms of processing, has over 600-fold higher inhibitory activity when phosphorylated, creating a molecular switch for regulating the phosphorylation status of PPP1CA substrates and smooth muscle contraction. The main inhibitory site appears to be Thr-73. In terms of tissue distribution, detected in breast cancer.

The protein localises to the cytoplasm. It localises to the membrane. In terms of biological role, inhibitor of the PP1 regulatory subunit PPP1CA. This is Protein phosphatase 1 regulatory subunit 14C (PPP1R14C) from Homo sapiens (Human).